The chain runs to 304 residues: Homoserine kinase (304 aa).

Residue 90–100 participates in ATP binding; sequence PLARGLGSSAS.

This sequence belongs to the GHMP kinase family. Homoserine kinase subfamily.

It is found in the cytoplasm. The enzyme catalyses L-homoserine + ATP = O-phospho-L-homoserine + ADP + H(+). It functions in the pathway amino-acid biosynthesis; L-threonine biosynthesis; L-threonine from L-aspartate: step 4/5. In terms of biological role, catalyzes the ATP-dependent phosphorylation of L-homoserine to L-homoserine phosphate. The chain is Homoserine kinase from Staphylococcus aureus (strain JH9).